A 213-amino-acid polypeptide reads, in one-letter code: Pyrrolidone-carboxylate peptidase (213 aa).

Active-site residues include Glu-78, Cys-141, and His-165.

Belongs to the peptidase C15 family. In terms of assembly, homotetramer.

The protein localises to the cytoplasm. It catalyses the reaction Release of an N-terminal pyroglutamyl group from a polypeptide, the second amino acid generally not being Pro.. Removes 5-oxoproline from various penultimate amino acid residues except L-proline. This is Pyrrolidone-carboxylate peptidase from Enterococcus faecalis (strain ATCC 700802 / V583).